A 381-amino-acid polypeptide reads, in one-letter code: Outer membrane protein assembly factor BamB (381 aa).

Residues Met-1 to Ala-22 form the signal peptide. Cys-23 is lipidated: N-palmitoyl cysteine. The S-diacylglycerol cysteine moiety is linked to residue Cys-23.

Belongs to the BamB family. In terms of assembly, part of the Bam complex.

The protein localises to the cell outer membrane. In terms of biological role, part of the outer membrane protein assembly complex, which is involved in assembly and insertion of beta-barrel proteins into the outer membrane. The polypeptide is Outer membrane protein assembly factor BamB (Burkholderia pseudomallei (strain K96243)).